Reading from the N-terminus, the 346-residue chain is Putative toluene-4-sulfonate monooxygenase system iron-sulfur subunit TsaM2 (346 aa).

One can recognise a Rieske domain in the interval 7–108; that stretch reads WYVAGMATDC…LVERHGLLWI (102 aa). Residues C47, H49, C66, and H69 each contribute to the [2Fe-2S] cluster site.

As to quaternary structure, homotetramer. Part of the p-toluenesulfonate methyl-monooxygenase complex TsaBM, comprising the reductase TsaB and the oxygenase TsaM. The cofactor is [2Fe-2S] cluster.

The catalysed reaction is toluene-4-sulfonate + NADH + O2 + H(+) = 4-(hydroxymethyl)benzenesulfonate + NAD(+) + H2O. Functionally, involved in the toluene-4-sulfonate degradation pathway. Does not discriminate between the sulfonate and the carboxyl substituents and can also be involved in the p-toluenecarboxylate degradation pathway. This is Putative toluene-4-sulfonate monooxygenase system iron-sulfur subunit TsaM2 (tsaM2) from Comamonas testosteroni (Pseudomonas testosteroni).